Consider the following 254-residue polypeptide: 5'-nucleotidase SurE (254 aa).

Asp-8, Asp-9, Ser-40, and Asn-93 together coordinate a divalent metal cation.

The protein belongs to the SurE nucleotidase family. Requires a divalent metal cation as cofactor.

It localises to the cytoplasm. It catalyses the reaction a ribonucleoside 5'-phosphate + H2O = a ribonucleoside + phosphate. Its function is as follows. Nucleotidase that shows phosphatase activity on nucleoside 5'-monophosphates. In Methylobacterium radiotolerans (strain ATCC 27329 / DSM 1819 / JCM 2831 / NBRC 15690 / NCIMB 10815 / 0-1), this protein is 5'-nucleotidase SurE.